A 162-amino-acid chain; its full sequence is Probable chemoreceptor glutamine deamidase CheD (162 aa).

It belongs to the CheD family.

It carries out the reaction L-glutaminyl-[protein] + H2O = L-glutamyl-[protein] + NH4(+). Functionally, probably deamidates glutamine residues to glutamate on methyl-accepting chemotaxis receptors (MCPs), playing an important role in chemotaxis. The sequence is that of Probable chemoreceptor glutamine deamidase CheD from Clostridium botulinum (strain Alaska E43 / Type E3).